The sequence spans 91 residues: Small integral membrane protein 13 (91 aa).

The helical transmembrane segment at 10–30 threads the bilayer; the sequence is LVFVATLLIVLLLMVCGWYFV. Positions 47 to 91 are disordered; the sequence is DTGSQEGDHEPSGSETEEDTSSSPHRIRSARQRRAPADEGHRPLT. Residues Ser58 and Ser60 each carry the phosphoserine modification. Position 62 is a phosphothreonine (Thr62). Ser69 bears the Phosphoserine mark. A compositionally biased stretch (basic residues) spans 71-80; the sequence is HRIRSARQRR. Residues 81–91 show a composition bias toward basic and acidic residues; sequence APADEGHRPLT.

It belongs to the SMIM13 family.

Its subcellular location is the membrane. This chain is Small integral membrane protein 13 (SMIM13), found in Homo sapiens (Human).